Reading from the N-terminus, the 492-residue chain is B3 domain-containing protein REM3 (492 aa).

Residues 12–104 (NRPFFVRSLA…VFHVTPSGRS (93 aa)) constitute a DNA-binding region (TF-B3 1). The span at 105–116 (FSQIRTSSSSGD) shows a compositional bias: low complexity. Residues 105-134 (FSQIRTSSSSGDYDSDDDDDEAGDDDSDSK) form a disordered region. Positions 117 to 131 (YDSDDDDDEAGDDDS) are enriched in acidic residues. 2 DNA-binding regions (TF-B3) span residues 154–250 (YCLL…LCFK) and 286–382 (FLTV…FCSE). The segment covering 385–395 (IEQEEAPEERG) has biased composition (basic and acidic residues). The disordered stretch occupies residues 385-427 (IEQEEAPEERGTPLPKRARVSAEVGHSRRTQAPNKSSDDPKIL).

The protein resides in the nucleus. The protein is B3 domain-containing protein REM3 (REM3) of Arabidopsis thaliana (Mouse-ear cress).